The primary structure comprises 313 residues: L-lactate dehydrogenase 1 (313 aa).

NAD(+)-binding positions include Val15, Asp36, Lys41, Tyr66, and 80–81 (GA). Residues Gln83 and Arg89 each contribute to the substrate site. NAD(+) is bound by residues Ser102, 119–121 (VSN), and Ser144. Residue 121 to 124 (NPVD) participates in substrate binding. 149–152 (DTSR) lines the substrate pocket. Beta-D-fructose 1,6-bisphosphate contacts are provided by Arg154 and His169. His176 serves as the catalytic Proton acceptor. Tyr222 is subject to Phosphotyrosine. Position 231 (Thr231) interacts with substrate.

The protein belongs to the LDH/MDH superfamily. LDH family. As to quaternary structure, homotetramer.

It localises to the cytoplasm. It carries out the reaction (S)-lactate + NAD(+) = pyruvate + NADH + H(+). It participates in fermentation; pyruvate fermentation to lactate; (S)-lactate from pyruvate: step 1/1. Its activity is regulated as follows. Allosterically activated by fructose 1,6-bisphosphate (FBP). Catalyzes the conversion of lactate to pyruvate. This is L-lactate dehydrogenase 1 from Clostridium acetobutylicum (strain ATCC 824 / DSM 792 / JCM 1419 / IAM 19013 / LMG 5710 / NBRC 13948 / NRRL B-527 / VKM B-1787 / 2291 / W).